The chain runs to 517 residues: Pseudaminic acid cytidylyltransferase and UDP-2,4-diacetamido-2,4,6-trideoxy-beta-L-altropyranose hydrolase (517 aa).

A pseudaminic acid cytidylyltransferase region spans residues 1–208; that stretch reads MRAIAIVLAR…ELSPLEVQDI (208 aa). Positions 209-517 are UDP-2,4-diacetamido-2,4,6-trideoxy-beta-L-altropyranose hydrolase; sequence AHFRRFRISQ…EGALREFLEI (309 aa). The active-site Proton acceptor; for UDP-2,4-diacetamido-2,4,6-trideoxy-beta-L-altropyranose hydrolase activity is the H244.

This sequence in the N-terminal section; belongs to the CMP-NeuNAc synthase family. It in the C-terminal section; belongs to the PseG family. As to quaternary structure, monomer. Mg(2+) serves as cofactor.

The catalysed reaction is UDP-2,4-diacetamido-2,4,6-trideoxy-beta-L-altrose + H2O = 2,4-diacetamido-2,4,6-trideoxy-beta-L-altrose + UDP + H(+). It carries out the reaction pseudaminate + CTP = CMP-pseudaminate + diphosphate. Functionally, catalyzes the fourth and sixth steps in the biosynthesis of pseudaminic acid, a sialic-acid-like sugar that is used to modify flagellin. The C-terminus mediates the fourth step of the pathway and catalyzes the removal of UDP from C-1 of UDP-2,4-diacetamido-2,4,6-trideoxy-beta-L-altropyranose forming 2,4-diacetamido-2,4,6-trideoxy-beta-L-altropyranose. The N-terminal part mediates the last step of the pathway by mediating activation of pseudaminic acid with CMP by forming CMP-pseudaminic acid. In Helicobacter pylori (strain ATCC 700392 / 26695) (Campylobacter pylori), this protein is Pseudaminic acid cytidylyltransferase and UDP-2,4-diacetamido-2,4,6-trideoxy-beta-L-altropyranose hydrolase.